The chain runs to 299 residues: MSVTSSPHRSGSVAVIGRPNVGKSTLTNALVGAKVSIVSNRPQTTRHRLLGIATFPEGQLVLVDTPGLHREQKRAMNRVMNRAARGSLEGVDAAVLVIEAGRWDEEDTLAFRVLSDAEVPVVLVVNKVDRLKDKTALLPFLAQVSEGRTFAAVHPVSALKRKGLEALVGDLLKLVPEAEAMFGEDEITDRSQRFLAGELVREQLMRQLGEELPYATTVEIERFAEDGALLRIGAVIWVEREGQKAIVIGKGGTRLKEIGGKARLQMERLFGAKVFLETWVRVREGWSDDEAALKAFGYE.

Residues 9–177 (RSGSVAVIGR…VGDLLKLVPE (169 aa)) enclose the Era-type G domain. The tract at residues 17–24 (GRPNVGKS) is G1. Residue 17–24 (GRPNVGKS) coordinates GTP. The tract at residues 43–47 (QTTRH) is G2. The segment at 64–67 (DTPG) is G3. GTP contacts are provided by residues 64 to 68 (DTPGL) and 126 to 129 (NKVD). The G4 stretch occupies residues 126–129 (NKVD). Positions 156–158 (VSA) are G5. Positions 200-284 (VREQLMRQLG…FLETWVRVRE (85 aa)) constitute a KH type-2 domain.

This sequence belongs to the TRAFAC class TrmE-Era-EngA-EngB-Septin-like GTPase superfamily. Era GTPase family. In terms of assembly, monomer.

The protein localises to the cytoplasm. It localises to the cell inner membrane. In terms of biological role, an essential GTPase that binds both GDP and GTP, with rapid nucleotide exchange. Plays a role in 16S rRNA processing and 30S ribosomal subunit biogenesis and possibly also in cell cycle regulation and energy metabolism. This is GTPase Era from Xanthomonas oryzae pv. oryzae (strain MAFF 311018).